The primary structure comprises 238 residues: DNA repair protein RecO (238 aa).

This sequence belongs to the RecO family.

In terms of biological role, involved in DNA repair and RecF pathway recombination. The sequence is that of DNA repair protein RecO from Aliivibrio salmonicida (strain LFI1238) (Vibrio salmonicida (strain LFI1238)).